Reading from the N-terminus, the 264-residue chain is ATP synthase subunit a (264 aa).

The next 6 helical transmembrane spans lie at 27-47, 87-107, 131-151, 172-192, 196-216, and 230-250; these read VHLD…FVFS, VGPL…IDLI, DISG…FYTI, LLIP…PVSL, LFGN…MYMA, and LAWA…FMML.

This sequence belongs to the ATPase A chain family. F-type ATPases have 2 components, CF(1) - the catalytic core - and CF(0) - the membrane proton channel. CF(1) has five subunits: alpha(3), beta(3), gamma(1), delta(1), epsilon(1). CF(0) has three main subunits: a(1), b(2) and c(9-12). The alpha and beta chains form an alternating ring which encloses part of the gamma chain. CF(1) is attached to CF(0) by a central stalk formed by the gamma and epsilon chains, while a peripheral stalk is formed by the delta and b chains.

It is found in the cell inner membrane. Functionally, key component of the proton channel; it plays a direct role in the translocation of protons across the membrane. The chain is ATP synthase subunit a from Pasteurella multocida (strain Pm70).